We begin with the raw amino-acid sequence, 66 residues long: Conotoxin Cal6.38 (66 aa).

The first 22 residues, 1–22 (MKLTFVLIVAVLVLAVCNFTVA), serve as a signal peptide directing secretion. 3 cysteine pairs are disulfide-bonded: C38–C55, C45–C59, and C54–C64.

This sequence belongs to the conotoxin O1 superfamily. Expressed by the venom duct.

Its subcellular location is the secreted. Its function is as follows. Probable neurotoxin. This is Conotoxin Cal6.38 from Californiconus californicus (California cone).